Consider the following 204-residue polypeptide: tRNA (guanine-N(7)-)-methyltransferase (204 aa).

Positions 36, 61, and 111 each coordinate S-adenosyl-L-methionine. Aspartate 111 is an active-site residue. Substrate-binding positions include lysine 115, aspartate 147, and threonine 177–glutamate 180.

Belongs to the class I-like SAM-binding methyltransferase superfamily. TrmB family.

It carries out the reaction guanosine(46) in tRNA + S-adenosyl-L-methionine = N(7)-methylguanosine(46) in tRNA + S-adenosyl-L-homocysteine. It participates in tRNA modification; N(7)-methylguanine-tRNA biosynthesis. Catalyzes the formation of N(7)-methylguanine at position 46 (m7G46) in tRNA. The sequence is that of tRNA (guanine-N(7)-)-methyltransferase from Chlorobium phaeobacteroides (strain DSM 266 / SMG 266 / 2430).